We begin with the raw amino-acid sequence, 576 residues long: Putative export ATP-binding/permease protein RT0691 (576 aa).

An ABC transmembrane type-1 domain is found at 20–303; the sequence is LIIVMISLLS…IFELLSEIHL (284 aa). A run of 6 helical transmembrane segments spans residues 21–41, 61–81, 135–155, 158–178, 242–262, and 277–297; these read IIVM…GSVF, ILYI…RSYF, FLSF…LMFF, FKLA…LIKF, ALFF…IVWI, and IISF…IFEL. An ABC transporter domain is found at 336–572; sequence IEFKNVDFTY…SEIYRNICRE (237 aa). 371–378 lines the ATP pocket; that stretch reads GRSGAGKS.

Belongs to the ABC transporter superfamily. Homodimer.

Its subcellular location is the cell inner membrane. Functionally, part of an ABC transporter complex. Transmembrane domains (TMD) form a pore in the inner membrane and the ATP-binding domain (NBD) is responsible for energy generation. This is Putative export ATP-binding/permease protein RT0691 from Rickettsia typhi (strain ATCC VR-144 / Wilmington).